Reading from the N-terminus, the 349-residue chain is Aquaporin-4 (349 aa).

A run of 2 helical transmembrane segments spans residues 92-112 (LSESLAMFFFMSLLLGCAATA) and 125-147 (AFYHGFSIIFAIYVAGGISGGLL). The NPA 1 motif lies at 148–150 (NPA). A helical membrane pass occupies residues 167 to 187 (LIYMSAQYFGAFIASAVVYLI). N194 and N207 each carry an N-linked (GlcNAc...) asparagine glycan. A run of 2 helical transmembrane segments spans residues 225-245 (GAIFNQIFCTMLLTIGFLSIC) and 256-276 (MFPFAVGMLIMTVFLAFSYSA). The NPA 2 motif lies at 281-283 (NPA). The helical transmembrane segment at 314 to 334 (WLFPYVGALLGGVIYEIFIGI) threads the bilayer.

It belongs to the MIP/aquaporin (TC 1.A.8) family.

Its subcellular location is the cell membrane. Its function is as follows. Aquaglyceroporin that may modulate the water content and osmolytes during anhydrobiosis. In Milnesium tardigradum (Water bear), this protein is Aquaporin-4.